We begin with the raw amino-acid sequence, 333 residues long: (2R)-3-sulfolactate dehydrogenase (NADP(+)) (333 aa).

This sequence belongs to the LDH2/MDH2 oxidoreductase family.

It carries out the reaction (2R)-3-sulfolactate + NADP(+) = 3-sulfopyruvate + NADPH + H(+). In terms of biological role, catalyzes the reduction of sulfopyruvate to (R)-sulfolactate. Together with SlcC, provides a racemase system that converts (2S)-3-sulfolactate to (2R)-3-sulfolactate, which is degraded further by (2R)-sulfolactate sulfo-lyase. The protein is (2R)-3-sulfolactate dehydrogenase (NADP(+)) (comC) of Chromohalobacter salexigens (strain ATCC BAA-138 / DSM 3043 / CIP 106854 / NCIMB 13768 / 1H11).